We begin with the raw amino-acid sequence, 208 residues long: Large ribosomal subunit protein uL3 (208 aa).

The tract at residues 116 to 148 is disordered; it reads GFQGVIKRHGQSRGPMAHGSRYHRRPGSMGPVA.

It belongs to the universal ribosomal protein uL3 family. As to quaternary structure, part of the 50S ribosomal subunit. Forms a cluster with proteins L14 and L19.

Its function is as follows. One of the primary rRNA binding proteins, it binds directly near the 3'-end of the 23S rRNA, where it nucleates assembly of the 50S subunit. The sequence is that of Large ribosomal subunit protein uL3 from Streptococcus agalactiae serotype Ia (strain ATCC 27591 / A909 / CDC SS700).